The following is a 269-amino-acid chain: Phosphonoacetaldehyde hydrolase (269 aa).

Aspartate 10 serves as the catalytic Nucleophile. 2 residues coordinate Mg(2+): aspartate 10 and alanine 12. Lysine 52 serves as the catalytic Schiff-base intermediate with substrate. Aspartate 186 is a Mg(2+) binding site.

This sequence belongs to the HAD-like hydrolase superfamily. PhnX family. As to quaternary structure, homodimer. Requires Mg(2+) as cofactor.

It carries out the reaction phosphonoacetaldehyde + H2O = acetaldehyde + phosphate + H(+). In terms of biological role, involved in phosphonate degradation. This is Phosphonoacetaldehyde hydrolase from Salmonella typhi.